The chain runs to 294 residues: MDHHQYHHHDQYQHQMMTSTNNNSYNTIVTTQPPPTTTTMDSTTATTMIMDDEKKLMTTMSTRPQEPRNCPRCNSSNTKFCYYNNYSLAQPRYLCKSCRRYWTEGGSLRNVPVGGGSRKNKKLPFPNSSTSSSTKNLPDLNPPFVFTSSASSSNPSKTHQNNNDLSLSFSSPMQDKRAQGHYGHFSEQVVTGGQNCLFQAPMGMIQFRQEYDHEHPKKNLGFSLDRNEEEIGNHDNFVVNEEGSKMMYPYGDHEDRQQHHHVRHDDGNKKREGGSSNELWSGIILGGDSGGPTW.

The Dof-type zinc finger occupies 68-122 (RNCPRCNSSNTKFCYYNNYSLAQPRYLCKSCRRYWTEGGSLRNVPVGGGSRKNKK). Zn(2+) is bound by residues C70, C73, C95, and C98. Disordered regions lie at residues 109-178 (RNVP…DKRA) and 247-294 (MYPY…GPTW). Composition is skewed to polar residues over residues 126–136 (PNSSTSSSTKN) and 157–173 (KTHQ…SSPM). Positions 251–273 (GDHEDRQQHHHVRHDDGNKKREG) are enriched in basic and acidic residues. Gly residues predominate over residues 284-294 (ILGGDSGGPTW).

It is found in the nucleus. In terms of biological role, transcription factor that binds specifically to a 5'-AA[AG]G-3' consensus core sequence. This chain is Dof zinc finger protein DOF4.1 (DOF4.1), found in Arabidopsis thaliana (Mouse-ear cress).